Consider the following 50-residue polypeptide: uncharacterized protein (50 aa).

The protein resides in the mitochondrion. This is an uncharacterized protein from Saccharomyces cerevisiae (strain ATCC 204508 / S288c) (Baker's yeast).